The following is a 758-amino-acid chain: MDPGGLKHSKDKGLAFGKLSESSVEGSFSGDTGGSKSTTSTSLMHLPGSRPQPPARDSANGLNVTTTQMELSTGGLTIEEAEVKVMEKAIRMQQPQKPQQNQQLFENFALLEASIADLNRSNTPGSSVLGRPHDLFSLKTENFSPMDKDRLDMGSVSFGQSQKDLDVNERLLGDNTMDILQDLDLPGSLSDLNEFYVSDEAAFLSSLSVEDVLLEDGNMETKPIDCSNGGNCTNVDSADQQKQLLEAGVSMPVIKTEEDADTSFIQLCTPGVIKQENDRRSFCQISSLDLPSTHNSAGSISGPSYPYGANTSTAVSLQQDQKPVFGLYPPLPSVSDSWNRGNGYATGSGMSSSSFPVGFSSPKARPEASGSASSAPAKPSGPTHKICLVCSDEASGCHYGVLTCGSCKVFFKRAVEGWRARQNTDGQHNYLCAGRNDCIIDKIRRKNCPACRFRKCLQAGMNLEARKNKKLIRLKGQQTTMEPNPPPPDERACALIPKSMPQLVPTMLSLLKAIEPEAIYSGYDSTIPDTSTRLMTTLNRLGGQQVVSAVKWAKSLPGFRNLHLDDQMTLLQCSWLFLMSFGLGWRSYQQCNGGMLCFAPDLVINDERMKLPYMTDQCEQMLKISTEFVRLQVSYDEYLCMKVLLLLSTVPKDGLKSQAVFDEIRMTYIKELGKAIVKREENSSQNWQRFYQLTKLLDSMQEMVGGLLQICFYTFVNKSLSVEFPEMLAEIISNQLPKFKDGSVKPLLFHALNHDTMP.

Disordered regions lie at residues 1 to 61 and 349 to 382; these read MDPG…SANG and GMSSSSFPVGFSSPKARPEASGSASSAPAKPSGP. The tract at residues 1-386 is modulating; sequence MDPGGLKHSK…AKPSGPTHKI (386 aa). The span at 26–42 shows a compositional bias: low complexity; sequence GSFSGDTGGSKSTTSTS. 2 consecutive NR C4-type zinc fingers follow at residues 387-407 and 432-456; these read CLVCSDEASGCHYGVLTCGSC and CAGRNDCIIDKIRRKNCPACRFRKC. The nuclear receptor DNA-binding region spans 387–461; sequence CLVCSDEASG…RFRKCLQAGM (75 aa). A hinge region spans residues 462–498; sequence NLEARKNKKLIRLKGQQTTMEPNPPPPDERACALIPK. An NR LBD domain is found at 499–733; sequence SMPQLVPTML…FPEMLAEIIS (235 aa).

This sequence belongs to the nuclear hormone receptor family. NR3 subfamily. As to quaternary structure, heteromultimeric cytoplasmic complex with HSP90AA1, HSPA1A/HSPA1B, and FKBP5 or another immunophilin such as PPID, STIP1, or the immunophilin homolog PPP5C. Upon ligand binding FKBP5 dissociates from the complex and FKBP4 takes its place, thereby linking the complex to dynein and mediating transport to the nucleus, where the complex dissociates. Directly interacts with UNC45A. Binds to DNA as a homodimer, and as heterodimer with NR3C2 or the retinoid X receptor. Binds STAT5A and STAT5B homodimers and heterodimers. Interacts with NRIP1, POU2F1, POU2F2 and TRIM28. Interacts with several coactivator complexes, including the SMARCA4 complex, CREBBP/EP300, TADA2L (Ada complex) and p160 coactivators such as NCOA2 and NCOA6. Interaction with BAG1 inhibits transactivation. Interacts with HEXIM1, PELP1 and TGFB1I1. Interacts with NCOA1, NCOA3, SMARCA4, SMARCC1, SMARCD1, and SMARCE1. Phosphorylated in the absence of hormone; becomes hyperphosphorylated in the presence of glucocorticoids. May be dephosphorylated by PPP5C, attenuates NR3C1 action. Isoform 1 is expressed in all tissues tested including liver, gills, intestine, skeletal muscle, kidney, heart, spleen, stomach, brain, pituitary, ovary, testis, skin and bladder. Isoform 2 is found only in testis.

It localises to the cytoplasm. The protein localises to the nucleus. Its subcellular location is the mitochondrion. It is found in the cytoskeleton. The protein resides in the spindle. It localises to the microtubule organizing center. The protein localises to the centrosome. Receptor for glucocorticoids (GC). Has a dual mode of action: as a transcription factor that binds to glucocorticoid response elements (GRE), both for nuclear and mitochondrial DNA, and as a modulator of other transcription factors. Affects inflammatory responses, cellular proliferation and differentiation in target tissues. Involved in chromatin remodeling. Plays a role in rapid mRNA degradation by binding to the 5' UTR of target mRNAs and interacting with PNRC2 in a ligand-dependent manner which recruits the RNA helicase UPF1 and the mRNA-decapping enzyme DCP1A, leading to RNA decay. Could act as a coactivator for STAT5-dependent transcription upon growth hormone (GH) stimulation and could reveal an essential role of hepatic GR in the control of body growth. Mediates glucocorticoid-induced apoptosis. Promotes accurate chromosome segregation during mitosis. May act as a tumor suppressor. May play a negative role in adipogenesis through the regulation of lipolytic and antilipogenic gene expression. In Oncorhynchus mykiss (Rainbow trout), this protein is Glucocorticoid receptor (nr3c1).